Here is a 399-residue protein sequence, read N- to C-terminus: Chorismate synthase (399 aa).

Arginine 40 and arginine 46 together coordinate NADP(+). FMN is bound by residues 134 to 136 (RAS), 255 to 256 (QA), glycine 299, 314 to 318 (KPIST), and arginine 340.

Belongs to the chorismate synthase family. As to quaternary structure, homotetramer. FMNH2 is required as a cofactor.

The enzyme catalyses 5-O-(1-carboxyvinyl)-3-phosphoshikimate = chorismate + phosphate. It participates in metabolic intermediate biosynthesis; chorismate biosynthesis; chorismate from D-erythrose 4-phosphate and phosphoenolpyruvate: step 7/7. Catalyzes the anti-1,4-elimination of the C-3 phosphate and the C-6 proR hydrogen from 5-enolpyruvylshikimate-3-phosphate (EPSP) to yield chorismate, which is the branch point compound that serves as the starting substrate for the three terminal pathways of aromatic amino acid biosynthesis. This reaction introduces a second double bond into the aromatic ring system. The sequence is that of Chorismate synthase from Mycolicibacterium smegmatis (strain ATCC 700084 / mc(2)155) (Mycobacterium smegmatis).